A 389-amino-acid chain; its full sequence is Mitochondrial carrier homolog 1 (389 aa).

Residues Met1–Ala78 form a disordered region. At Met1–Thr93 the chain is on the mitochondrial intermembrane side. The segment covering Gly15 to Pro33 has biased composition (gly residues). The residue at position 29 (Arg29) is an Omega-N-methylarginine. Solcar repeat units lie at residues Thr81–Asp176 and Lys192–Tyr280. A helical membrane pass occupies residues Ala94–Leu104. Residues Leu105–Arg155 lie on the Cytoplasmic side of the membrane. A helical transmembrane segment spans residues Leu156–Asp176. The Mitochondrial intermembrane segment spans residues Glu177 to Arg209. Residues Met210 to Arg229 traverse the membrane as a helical segment. At Glu230–Val254 the chain is on the cytoplasmic side. A helical membrane pass occupies residues Gly255 to Ala279. The Mitochondrial intermembrane portion of the chain corresponds to Tyr280–Ser322. Residues Met323 to Leu342 traverse the membrane as a helical segment. At Arg343 to Arg371 the chain is on the cytoplasmic side. A helical transmembrane segment spans residues Gly372 to Glu389.

It belongs to the mitochondrial carrier (TC 2.A.29) family. Interacts with PSEN1.

It localises to the mitochondrion outer membrane. Functionally, protein insertase that mediates insertion of transmembrane proteins into the mitochondrial outer membrane. Catalyzes insertion of proteins with alpha-helical transmembrane regions, such as signal-anchored, tail-anchored and multi-pass membrane proteins. Does not mediate insertion of beta-barrel transmembrane proteins. May play a role in apoptosis. This Mus musculus (Mouse) protein is Mitochondrial carrier homolog 1 (Mtch1).